The sequence spans 428 residues: Lysophosphatidic acid phosphatase type 6 (428 aa).

Residues 1–32 (MITGVFSMRLWTPVGVLTSLAYCLHQRRVALA) constitute a mitochondrion transit peptide. Residues 58–168 (RHGARSPRKP…VFIRSTNIFR (111 aa)) form a substrate binding region. Residue H59 is the Nucleophile of the active site. The active-site Proton donor is D335.

This sequence belongs to the histidine acid phosphatase family. In terms of assembly, monomer.

It localises to the mitochondrion. It catalyses the reaction a phosphate monoester + H2O = an alcohol + phosphate. The enzyme catalyses 1-(9Z-octadecenoyl)-sn-glycero-3-phosphate + H2O = 1-(9Z-octadecenoyl)-sn-glycerol + phosphate. Hydrolyzes lysophosphatidic acid (LPA) containing a medium length fatty acid chain to the corresponding monoacylglycerol. Has highest activity with lysophosphatidic acid containing myristate (C14:0), monounsaturated oleate (C18:1) or palmitate (C16:0), and lower activity with C18:0 and C6:0 lysophosphatidic acid. In Pongo abelii (Sumatran orangutan), this protein is Lysophosphatidic acid phosphatase type 6 (ACP6).